A 641-amino-acid chain; its full sequence is Isomalto-dextranase (641 aa).

Residues 1-39 constitute a signal peptide (tat-type signal); it reads MMNLSRRTLLTTGSAATLAYALGMAGSAQAATAVTARPG. D227 (nucleophile) is an active-site residue. D288 functions as the Proton donor in the catalytic mechanism. The CBM6 domain occupies 500–640; sequence TRYPAAFAAW…AINLNWIELD (141 aa). The disordered stretch occupies residues 556 to 588; the sequence is SGYRYANATDDNTTSKTTTKKANPEKADRSTVD. Low complexity predominate over residues 561-576; the sequence is ANATDDNTTSKTTTKK. The segment covering 577 to 586 has biased composition (basic and acidic residues); sequence ANPEKADRST.

The protein belongs to the glycosyl hydrolase 27 family. Predicted to be exported by the Tat system. The position of the signal peptide cleavage has been experimentally proven.

It is found in the secreted. The catalysed reaction is Hydrolysis of (1-&gt;6)-alpha-D-glucosidic linkages in polysaccharides, to remove successive isomaltose units from the non-reducing ends of the chains.. The chain is Isomalto-dextranase (imd) from Arthrobacter globiformis.